The chain runs to 171 residues: Ribosome maturation factor RimM (171 aa).

Positions 97 to 170 (KLNYFSWDHY…IIYMKLPVGL (74 aa)) constitute a PRC barrel domain.

It belongs to the RimM family. Binds ribosomal protein uS19.

It is found in the cytoplasm. An accessory protein needed during the final step in the assembly of 30S ribosomal subunit, possibly for assembly of the head region. Essential for efficient processing of 16S rRNA. May be needed both before and after RbfA during the maturation of 16S rRNA. It has affinity for free ribosomal 30S subunits but not for 70S ribosomes. The chain is Ribosome maturation factor RimM from Azobacteroides pseudotrichonymphae genomovar. CFP2.